The primary structure comprises 376 residues: Cytochrome c oxidase subunit 2, mitochondrial (376 aa).

A helical membrane pass occupies residues 164–184 (IFFFLVQILVFVLWVLSRALW). At 185–204 (CFRSKISPIPQRIVHGTTIE) the chain is on the mitochondrial matrix side. Residues 205-225 (ILWTILPSIILMFIAIPSFTL) form a helical membrane-spanning segment. At 226–376 (LYSMDDVVVD…YGSWVSNQIQ (151 aa)) the chain is on the mitochondrial intermembrane side. Cu cation is bound by residues histidine 309, cysteine 344, glutamate 346, cysteine 348, histidine 352, and methionine 355. Position 346 (glutamate 346) interacts with Mg(2+).

Belongs to the cytochrome c oxidase subunit 2 family. As to quaternary structure, component of the cytochrome c oxidase (complex IV, CIV), a multisubunit enzyme composed of a catalytic core of 3 subunits and several supernumerary subunits. The complex exists as a monomer or a dimer and forms supercomplexes (SCs) in the inner mitochondrial membrane with ubiquinol-cytochrome c oxidoreductase (cytochrome b-c1 complex, complex III, CIII). Cu cation serves as cofactor.

It localises to the mitochondrion inner membrane. The enzyme catalyses 4 Fe(II)-[cytochrome c] + O2 + 8 H(+)(in) = 4 Fe(III)-[cytochrome c] + 2 H2O + 4 H(+)(out). In terms of biological role, component of the cytochrome c oxidase, the last enzyme in the mitochondrial electron transport chain which drives oxidative phosphorylation. The respiratory chain contains 3 multisubunit complexes succinate dehydrogenase (complex II, CII), ubiquinol-cytochrome c oxidoreductase (cytochrome b-c1 complex, complex III, CIII) and cytochrome c oxidase (complex IV, CIV), that cooperate to transfer electrons derived from NADH and succinate to molecular oxygen, creating an electrochemical gradient over the inner membrane that drives transmembrane transport and the ATP synthase. Cytochrome c oxidase is the component of the respiratory chain that catalyzes the reduction of oxygen to water. Electrons originating from reduced cytochrome c in the intermembrane space (IMS) are transferred via the dinuclear copper A center (CU(A)) of subunit 2 and heme A of subunit 1 to the active site in subunit 1, a binuclear center (BNC) formed by heme A3 and copper B (CU(B)). The BNC reduces molecular oxygen to 2 water molecules using 4 electrons from cytochrome c in the IMS and 4 protons from the mitochondrial matrix. In Vigna unguiculata (Cowpea), this protein is Cytochrome c oxidase subunit 2, mitochondrial (COX2).